Here is an 89-residue protein sequence, read N- to C-terminus: UPF0237 protein CE1668 (89 aa).

Residues 4-78 form the ACT domain; it reads IMTVTGQDHT…KEQGLVIRIQ (75 aa).

The protein belongs to the UPF0237 family.

In Corynebacterium efficiens (strain DSM 44549 / YS-314 / AJ 12310 / JCM 11189 / NBRC 100395), this protein is UPF0237 protein CE1668.